A 504-amino-acid chain; its full sequence is Cytochrome P450 6B2 (504 aa).

Cys-445 lines the heme pocket.

Belongs to the cytochrome P450 family. Heme serves as cofactor.

The protein resides in the endoplasmic reticulum membrane. It is found in the microsome membrane. The catalysed reaction is an organic molecule + reduced [NADPH--hemoprotein reductase] + O2 = an alcohol + oxidized [NADPH--hemoprotein reductase] + H2O + H(+). The sequence is that of Cytochrome P450 6B2 (CYP6B2) from Helicoverpa armigera (Cotton bollworm).